A 120-amino-acid polypeptide reads, in one-letter code: NAD(P)H-quinone oxidoreductase subunit 3, chloroplastic (120 aa).

Transmembrane regions (helical) follow at residues 9–29 (IFWA…LISG), 64–84 (MFAL…PWAM), and 88–108 (VLGV…IVGL).

This sequence belongs to the complex I subunit 3 family. As to quaternary structure, NDH is composed of at least 16 different subunits, 5 of which are encoded in the nucleus.

It is found in the plastid. It localises to the chloroplast thylakoid membrane. The catalysed reaction is a plastoquinone + NADH + (n+1) H(+)(in) = a plastoquinol + NAD(+) + n H(+)(out). It carries out the reaction a plastoquinone + NADPH + (n+1) H(+)(in) = a plastoquinol + NADP(+) + n H(+)(out). Its function is as follows. NDH shuttles electrons from NAD(P)H:plastoquinone, via FMN and iron-sulfur (Fe-S) centers, to quinones in the photosynthetic chain and possibly in a chloroplast respiratory chain. The immediate electron acceptor for the enzyme in this species is believed to be plastoquinone. Couples the redox reaction to proton translocation, and thus conserves the redox energy in a proton gradient. This Ceratophyllum demersum (Rigid hornwort) protein is NAD(P)H-quinone oxidoreductase subunit 3, chloroplastic.